We begin with the raw amino-acid sequence, 447 residues long: NADP-specific glutamate dehydrogenase (447 aa).

Positions 92, 113, and 116 each coordinate substrate. K128 functions as the Proton donor in the catalytic mechanism. G167 lines the substrate pocket. NADP(+) is bound by residues T211 and N242. S380 lines the substrate pocket.

This sequence belongs to the Glu/Leu/Phe/Val dehydrogenases family. Homohexamer.

The enzyme catalyses L-glutamate + NADP(+) + H2O = 2-oxoglutarate + NH4(+) + NADPH + H(+). Its activity is regulated as follows. Competitively inhibited by homoserine and by glutamine. Its function is as follows. Catalyzes the reversible oxidative deamination of glutamate to alpha-ketoglutarate and ammonia. The chain is NADP-specific glutamate dehydrogenase from Escherichia coli (strain K12).